Here is a 328-residue protein sequence, read N- to C-terminus: Cell division protein ZipA (328 aa).

At 1 to 4 (MDLN) the chain is on the periplasmic side. The helical transmembrane segment at 5–25 (TILIIVGIVALVALIVHGLWS) threads the bilayer. Residues 26 to 328 (NRREKSKYFD…NAEQAYLARV (303 aa)) are Cytoplasmic-facing. The segment at 44 to 82 (SLTSRSHTQEEMVQPNNISPNTYVENGHTPIPQPTTEKL) is disordered. Positions 57-67 (QPNNISPNTYV) are enriched in polar residues.

This sequence belongs to the ZipA family. Interacts with FtsZ via their C-terminal domains.

Its subcellular location is the cell inner membrane. Essential cell division protein that stabilizes the FtsZ protofilaments by cross-linking them and that serves as a cytoplasmic membrane anchor for the Z ring. Also required for the recruitment to the septal ring of downstream cell division proteins. The protein is Cell division protein ZipA of Haemophilus influenzae (strain ATCC 51907 / DSM 11121 / KW20 / Rd).